A 259-amino-acid chain; its full sequence is GEM-like protein 1 (259 aa).

Residues 1–11 (MSGQENHDHGR) are compositionally biased toward basic and acidic residues. Positions 1–79 (MSGQENHDHG…PSPAPRNTMD (79 aa)) are disordered. The span at 13-30 (SSTPAAASEPSKAAAHSS) shows a compositional bias: low complexity. Residues 138–215 (KVFKQTFDCL…NQLKAVNPST (78 aa)) enclose the GRAM domain.

This sequence belongs to the GEM family. Interacts with AFH1.

The chain is GEM-like protein 1 (FIP1) from Arabidopsis thaliana (Mouse-ear cress).